The following is a 1400-amino-acid chain: Macrophage-stimulating protein receptor (1400 aa).

The signal sequence occupies residues 1–24 (MELLPPLPQSFLLLLLLPAKPAAG). The Extracellular segment spans residues 25–957 (EDWQCPRTPY…PGPDGVPQST (933 aa)). Positions 31-522 (RTPYAASRDF…SGDQVFQVPI (492 aa)) constitute a Sema domain. N-linked (GlcNAc...) asparagine glycosylation occurs at Asn-66. Disulfide bonds link Cys-101-Cys-104, Cys-107-Cys-162, Cys-135-Cys-143, Cys-174-Cys-177, Cys-300-Cys-367, Cys-385-Cys-407, and Cys-386-Cys-422. N-linked (GlcNAc...) asparagine glycosylation is found at Asn-419, Asn-458, and Asn-488. Cystine bridges form between Cys-527–Cys-545, Cys-533–Cys-567, Cys-536–Cys-552, and Cys-548–Cys-558. IPT/TIG domains lie at 569–671 (PKLT…FRVD), 684–767 (PVLI…FQYR), and 770–860 (PVVL…FRFL). N-linked (GlcNAc...) asparagine glycans are attached at residues Asn-654, Asn-720, Asn-841, and Asn-897. Residues 958-978 (LLGILLPLLLLVAALATALVF) traverse the membrane as a helical segment. Over 979-1400 (SYWWRRKQLV…RPLSEPPRPT (422 aa)) the chain is Cytoplasmic. Positions 1082–1345 (THSDRVIGKG…VLVGEVEQIV (264 aa)) constitute a Protein kinase domain. ATP is bound by residues 1088–1096 (IGKGHFGVV), Lys-1114, and 1161–1164 (LPYM). Residue Asp-1208 is the Proton acceptor of the active site. Arg-1212 contacts ATP. A phosphotyrosine; by autocatalysis mark is found at Tyr-1238, Tyr-1239, Tyr-1353, and Tyr-1360. The tract at residues 1367–1400 (TSHEMNVRPEQPQFSPMPGNVRRPRPLSEPPRPT) is disordered.

The protein belongs to the protein kinase superfamily. Tyr protein kinase family. Heterodimer of an alpha chain and a beta chain which are disulfide linked. Binds PLXNB1. Associates with and is negatively regulated by HYAL2. Interacts when phosphorylated with downstream effectors including PIK3R1, PCLG1, GRB2 and GAB1. Interacts with integrin beta1/ITGB1 in a ligand-independent fashion. Proteolytic processing yields the two subunits. In terms of processing, autophosphorylated in response to ligand binding on Tyr-1238 and Tyr-1239 in the kinase domain leading to further phosphorylation of Tyr-1353 and Tyr-1360 in the C-terminal multifunctional docking site. Post-translationally, ubiquitinated. Ubiquitination by CBL regulates the receptor stability and activity through proteasomal degradation. O-mannosylation of IPT/TIG domains on Thr or Ser residues by TMEM260 is required for protein maturation. O-mannosylated residues are composed of single mannose glycans that are not elongated or modified. As to expression, expressed in colon, skin, lung and bone marrow.

It is found in the membrane. The enzyme catalyses L-tyrosyl-[protein] + ATP = O-phospho-L-tyrosyl-[protein] + ADP + H(+). Its activity is regulated as follows. In its inactive state, the C-terminal tail interacts with the catalytic domain and inhibits the kinase activity. Upon ligand binding, the C-terminal tail is displaced and becomes phosphorylated, thus increasing the kinase activity. In terms of biological role, receptor tyrosine kinase that transduces signals from the extracellular matrix into the cytoplasm by binding to MST1 ligand. Regulates many physiological processes including cell survival, migration and differentiation. Ligand binding at the cell surface induces autophosphorylation of RON on its intracellular domain that provides docking sites for downstream signaling molecules. Following activation by ligand, interacts with the PI3-kinase subunit PIK3R1, PLCG1 or the adapter GAB1. Recruitment of these downstream effectors by RON leads to the activation of several signaling cascades including the RAS-ERK, PI3 kinase-AKT, or PLCgamma-PKC. RON signaling activates the wound healing response by promoting epithelial cell migration, proliferation as well as survival at the wound site. Also plays a role in the innate immune response by regulating the migration and phagocytic activity of macrophages. Alternatively, RON can also promote signals such as cell migration and proliferation in response to growth factors other than MST1 ligand. This Homo sapiens (Human) protein is Macrophage-stimulating protein receptor (MST1R).